A 573-amino-acid polypeptide reads, in one-letter code: Putative ABC transporter ATP-binding protein LJ_1704 (573 aa).

ABC transporter domains are found at residues 6 to 247 and 303 to 536; these read IEFK…GVRE and LKLD…ASLK. Residues 40–47 and 337–344 contribute to the ATP site; these read GPSGSGKS and GQNGAGKT.

This sequence belongs to the ABC transporter superfamily.

The protein localises to the cell membrane. In terms of biological role, probably part of an ABC transporter complex. Responsible for energy coupling to the transport system. The protein is Putative ABC transporter ATP-binding protein LJ_1704 of Lactobacillus johnsonii (strain CNCM I-12250 / La1 / NCC 533).